A 255-amino-acid chain; its full sequence is Hydroxyacylglutathione hydrolase (255 aa).

Zn(2+)-binding residues include histidine 56, histidine 58, aspartate 60, histidine 61, histidine 114, aspartate 133, and histidine 171.

This sequence belongs to the metallo-beta-lactamase superfamily. Glyoxalase II family. As to quaternary structure, monomer. The cofactor is Zn(2+).

It catalyses the reaction an S-(2-hydroxyacyl)glutathione + H2O = a 2-hydroxy carboxylate + glutathione + H(+). It functions in the pathway secondary metabolite metabolism; methylglyoxal degradation; (R)-lactate from methylglyoxal: step 2/2. Functionally, thiolesterase that catalyzes the hydrolysis of S-D-lactoyl-glutathione to form glutathione and D-lactic acid. In Bradyrhizobium sp. (strain BTAi1 / ATCC BAA-1182), this protein is Hydroxyacylglutathione hydrolase.